A 65-amino-acid chain; its full sequence is VESP-VB2 (65 aa).

Positions methionine 1 to alanine 23 are cleaved as a signal peptide. AXPX repeat units lie at residues alanine 23–alanine 26, alanine 27–phenylalanine 30, alanine 31–glycine 34, alanine 35–glutamate 38, alanine 39–leucine 42, alanine 43–leucine 46, and alanine 47–phenylalanine 50. Residues alanine 24 to proline 49 constitute a propeptide that is removed on maturation. A Leucine amide modification is found at leucine 62.

It belongs to the MCD family. Mastoparan subfamily. Expressed by the venom gland.

The protein localises to the secreted. Antimicrobial peptide. Shows activity against both Gram-positive and -negative bacteria, as well against fungi. Also promotes important mast cell degranulation. Shows little hemolytic activity on rabbit and human erythrocytes. Its mast cell degranulation activity may be related to the activation of G-protein coupled receptors in mast cells as well as interaction with other proteins located in cell endosomal membranes in the mast cells. In Vespa bicolor (Black shield wasp), this protein is VESP-VB2.